We begin with the raw amino-acid sequence, 83 residues long: Scyreptin (83 aa).

In terms of biological role, cationic antimicrobial peptide that exhibits a potent and broad-spectrum antimicrobial activity against both bacteria and fungi, as well as against the multidrug-resistant bacteria P.aeruginosa. Exhibits rapid bactericidal kinetic. Acts by destroying the integrity of bacterial membranes, leading to bacterial death. Also exhibits potent anti-biofilm activity against P.aeruginosa. Shows high thermal stability and ion tolerance, as it maintains antibacterial activity even when heated to 100 degrees Celsius for 30 minutes and in presence of high levels of NaCl, CaCl(2) and MgCl(2). Does not show cytotoxicity and hemolytic activity. In a mouse model of burn infection, exhibits a remarkably reduction in the bacterial load caused by multidrug-resistant P.aeruginosa at the site of infection, and promotes wound healing. This is Scyreptin from Scylla paramamosain (Mud crab).